Here is an 806-residue protein sequence, read N- to C-terminus: Glycerol-3-phosphate acyltransferase (806 aa).

The HXXXXD motif signature appears at 305–310 (CHRSHM).

This sequence belongs to the GPAT/DAPAT family.

The protein resides in the cell inner membrane. It carries out the reaction sn-glycerol 3-phosphate + an acyl-CoA = a 1-acyl-sn-glycero-3-phosphate + CoA. The protein operates within phospholipid metabolism; CDP-diacylglycerol biosynthesis; CDP-diacylglycerol from sn-glycerol 3-phosphate: step 1/3. This Salmonella agona (strain SL483) protein is Glycerol-3-phosphate acyltransferase.